The chain runs to 273 residues: Eukaryotic translation initiation factor 3 subunit J (273 aa).

A disordered region spans residues methionine 1–glutamate 158. A compositionally biased stretch (acidic residues) spans aspartate 34–valine 54. Positions glutamate 50 to serine 97 form a coiled coil. Residues glutamate 55 to alanine 75 show a composition bias toward basic and acidic residues. The segment covering glutamate 95–threonine 104 has biased composition (acidic residues). The span at glutamate 105–aspartate 126 shows a compositional bias: basic and acidic residues.

This sequence belongs to the eIF-3 subunit J family. In terms of assembly, component of the eukaryotic translation initiation factor 3 (eIF-3) complex.

It is found in the cytoplasm. In terms of biological role, component of the eukaryotic translation initiation factor 3 (eIF-3) complex, which is involved in protein synthesis of a specialized repertoire of mRNAs and, together with other initiation factors, stimulates binding of mRNA and methionyl-tRNAi to the 40S ribosome. The eIF-3 complex specifically targets and initiates translation of a subset of mRNAs involved in cell proliferation. The polypeptide is Eukaryotic translation initiation factor 3 subunit J (Pyricularia oryzae (strain 70-15 / ATCC MYA-4617 / FGSC 8958) (Rice blast fungus)).